Consider the following 564-residue polypeptide: Keratin, type II cytoskeletal 6A (564 aa).

Residues 1–11 are compositionally biased toward low complexity; the sequence is MASTSTTIRSH. Residues 1 to 23 form a disordered region; it reads MASTSTTIRSHSSSRRGFSANSA. An N-acetylalanine modification is found at Ala2. The head stretch occupies residues 2–162; the sequence is ASTSTTIRSH…DPTIQRVRAE (161 aa). Positions 163 to 198 are coil 1A; it reads EREQIKTLNNKFASFIDKVRFLEQQNKVLETKWTLL. The IF rod domain maps to 163–476; it reads EREQIKTLNN…KLLEGEECRL (314 aa). A linker 1 region spans residues 199–217; that stretch reads QEQGTKTVRQNLEPLFEQY. The segment at 218-309 is coil 1B; it reads INNLRRQLDS…ALYDAELSQM (92 aa). Positions 310-333 are linker 12; it reads QTHISDTSVVLSMDNNRNLDLDSI. Positions 334 to 472 are coil 2; the sequence is IAEVKAQYEE…ATYRKLLEGE (139 aa). The tract at residues 473–564 is tail; that stretch reads ECRLNGEGVG…SSSSRKSYKH (92 aa).

It belongs to the intermediate filament family. As to quaternary structure, heterodimer of a type I and a type II keratin. KRT6 isomers associate with KRT16 and/or KRT17. Interacts with TCHP. Expressed in the corneal epithelium (at protein level).

Its function is as follows. Epidermis-specific type I keratin involved in wound healing. Involved in the activation of follicular keratinocytes after wounding, while it does not play a major role in keratinocyte proliferation or migration. Participates in the regulation of epithelial migration by inhibiting the activity of SRC during wound repair. The chain is Keratin, type II cytoskeletal 6A (KRT6A) from Homo sapiens (Human).